Here is a 336-residue protein sequence, read N- to C-terminus: Nuclear envelope-associated protein 3 (336 aa).

2 coiled-coil regions span residues 14 to 87 and 128 to 261; these read LKDL…IRAS and VLSK…LKKK. A Bipartite nuclear localization signal motif is present at residues 240–261; it reads KTKELEDQVENQRRIDQELKKK. The chain crosses the membrane as a helical span at residues 313–330; it reads LWDKSGFKIVVSMSMLIL.

Forms homomers and heteromers with NEAP1 and NEAP2. Interacts with SUN1 and SUN2.

The protein resides in the nucleus inner membrane. It is found in the nucleus. The protein localises to the nucleoplasm. The polypeptide is Nuclear envelope-associated protein 3 (Arabidopsis thaliana (Mouse-ear cress)).